The sequence spans 377 residues: Methionine import ATP-binding protein MetN 2 (377 aa).

The 238-residue stretch at 25 to 262 (IRIEHLSKTF…PKSAVARSFL (238 aa)) folds into the ABC transporter domain. 59 to 66 (GRSGAGKS) is an ATP binding site.

Belongs to the ABC transporter superfamily. Methionine importer (TC 3.A.1.24) family. As to quaternary structure, the complex is composed of two ATP-binding proteins (MetN), two transmembrane proteins (MetI) and a solute-binding protein (MetQ).

The protein resides in the cell inner membrane. It catalyses the reaction L-methionine(out) + ATP + H2O = L-methionine(in) + ADP + phosphate + H(+). The enzyme catalyses D-methionine(out) + ATP + H2O = D-methionine(in) + ADP + phosphate + H(+). Its function is as follows. Part of the ABC transporter complex MetNIQ involved in methionine import. Responsible for energy coupling to the transport system. The protein is Methionine import ATP-binding protein MetN 2 of Rhodopseudomonas palustris (strain ATCC BAA-98 / CGA009).